The following is a 101-amino-acid chain: NADH-quinone oxidoreductase subunit K (101 aa).

Transmembrane regions (helical) follow at residues 4-24, 29-49, and 61-81; these read LAHY…GIFL, IIII…NFVA, and IFVF…LAIL.

This sequence belongs to the complex I subunit 4L family. In terms of assembly, NDH-1 is composed of 14 different subunits. Subunits NuoA, H, J, K, L, M, N constitute the membrane sector of the complex.

The protein resides in the cell inner membrane. The catalysed reaction is a quinone + NADH + 5 H(+)(in) = a quinol + NAD(+) + 4 H(+)(out). Its function is as follows. NDH-1 shuttles electrons from NADH, via FMN and iron-sulfur (Fe-S) centers, to quinones in the respiratory chain. The immediate electron acceptor for the enzyme in this species is believed to be ubiquinone. Couples the redox reaction to proton translocation (for every two electrons transferred, four hydrogen ions are translocated across the cytoplasmic membrane), and thus conserves the redox energy in a proton gradient. The protein is NADH-quinone oxidoreductase subunit K of Burkholderia vietnamiensis (strain G4 / LMG 22486) (Burkholderia cepacia (strain R1808)).